The sequence spans 347 residues: Phosphoribosylformylglycinamidine cyclo-ligase (347 aa).

The protein belongs to the AIR synthase family.

The protein resides in the cytoplasm. The enzyme catalyses 2-formamido-N(1)-(5-O-phospho-beta-D-ribosyl)acetamidine + ATP = 5-amino-1-(5-phospho-beta-D-ribosyl)imidazole + ADP + phosphate + H(+). It participates in purine metabolism; IMP biosynthesis via de novo pathway; 5-amino-1-(5-phospho-D-ribosyl)imidazole from N(2)-formyl-N(1)-(5-phospho-D-ribosyl)glycinamide: step 2/2. The chain is Phosphoribosylformylglycinamidine cyclo-ligase from Alkaliphilus metalliredigens (strain QYMF).